A 346-amino-acid polypeptide reads, in one-letter code: tRNA N6-adenosine threonylcarbamoyltransferase (346 aa).

Positions 117 and 121 each coordinate Fe cation. Residues 139–143, Asp172, Gly185, Asp189, and Asn278 contribute to the substrate site; that span reads QVSGG. Asp308 contacts Fe cation.

Belongs to the KAE1 / TsaD family. The cofactor is Fe(2+).

The protein resides in the cytoplasm. The catalysed reaction is L-threonylcarbamoyladenylate + adenosine(37) in tRNA = N(6)-L-threonylcarbamoyladenosine(37) in tRNA + AMP + H(+). Its function is as follows. Required for the formation of a threonylcarbamoyl group on adenosine at position 37 (t(6)A37) in tRNAs that read codons beginning with adenine. Is involved in the transfer of the threonylcarbamoyl moiety of threonylcarbamoyl-AMP (TC-AMP) to the N6 group of A37, together with TsaE and TsaB. TsaD likely plays a direct catalytic role in this reaction. The chain is tRNA N6-adenosine threonylcarbamoyltransferase from Lactobacillus delbrueckii subsp. bulgaricus (strain ATCC 11842 / DSM 20081 / BCRC 10696 / JCM 1002 / NBRC 13953 / NCIMB 11778 / NCTC 12712 / WDCM 00102 / Lb 14).